The sequence spans 634 residues: ABC transporter B family member 29, chloroplastic (634 aa).

The N-terminal 51 residues, 1–51, are a transit peptide targeting the chloroplast; it reads MSFLLLTPPPCLLIPPPPLSHRRSSSLFLKHPFQPSPRPLSFCKPSALRLR. Helical transmembrane passes span 75–95, 119–139, 195–215, 219–239, 307–327, and 330–350; these read TVLL…QIVP, LVLA…QAFL, LLNT…HMIV, ALTL…AYLG, IVQV…VILA, and SLSS…IDPV. The region spanning 77–362 is the ABC transmembrane type-1 domain; the sequence is LLGWLCSCVS…LGKAYNELKQ (286 aa). One can recognise an ABC transporter domain in the interval 396–633; that stretch reads VELCDISFKY…KDSLTSAGLV (238 aa). 430–437 serves as a coordination point for ATP; the sequence is GPSGGGKT.

This sequence belongs to the ABC transporter superfamily. ABCB family. Multidrug resistance exporter (TC 3.A.1.201) subfamily.

It is found in the plastid. The protein localises to the chloroplast membrane. The sequence is that of ABC transporter B family member 29, chloroplastic (ABCB29) from Arabidopsis thaliana (Mouse-ear cress).